The sequence spans 396 residues: Ribosomal RNA large subunit methyltransferase I (396 aa).

A PUA domain is found at 2–81 (SVRLVLAKGR…ETIDIAFFTR (80 aa)).

Belongs to the methyltransferase superfamily. RlmI family.

It is found in the cytoplasm. It catalyses the reaction cytidine(1962) in 23S rRNA + S-adenosyl-L-methionine = 5-methylcytidine(1962) in 23S rRNA + S-adenosyl-L-homocysteine + H(+). Specifically methylates the cytosine at position 1962 (m5C1962) of 23S rRNA. The polypeptide is Ribosomal RNA large subunit methyltransferase I (Cronobacter sakazakii (strain ATCC BAA-894) (Enterobacter sakazakii)).